Consider the following 250-residue polypeptide: UDP-2,3-diacylglucosamine hydrolase (250 aa).

Mn(2+) is bound by residues D7, H9, D40, N78, and H113. 78-79 (NR) contacts substrate. Residues D121, S159, T163, K166, and H194 each coordinate substrate. The Mn(2+) site is built by H194 and H196.

Belongs to the LpxH family. Requires Mn(2+) as cofactor.

The protein resides in the cell inner membrane. It catalyses the reaction UDP-2-N,3-O-bis[(3R)-3-hydroxytetradecanoyl]-alpha-D-glucosamine + H2O = 2-N,3-O-bis[(3R)-3-hydroxytetradecanoyl]-alpha-D-glucosaminyl 1-phosphate + UMP + 2 H(+). Its pathway is glycolipid biosynthesis; lipid IV(A) biosynthesis; lipid IV(A) from (3R)-3-hydroxytetradecanoyl-[acyl-carrier-protein] and UDP-N-acetyl-alpha-D-glucosamine: step 4/6. Its function is as follows. Hydrolyzes the pyrophosphate bond of UDP-2,3-diacylglucosamine to yield 2,3-diacylglucosamine 1-phosphate (lipid X) and UMP by catalyzing the attack of water at the alpha-P atom. Involved in the biosynthesis of lipid A, a phosphorylated glycolipid that anchors the lipopolysaccharide to the outer membrane of the cell. The sequence is that of UDP-2,3-diacylglucosamine hydrolase from Pseudomonas fluorescens (strain ATCC BAA-477 / NRRL B-23932 / Pf-5).